The following is a 563-amino-acid chain: Sulfite reductase [NADPH] hemoprotein beta-component (563 aa).

Residues Cys427, Cys433, Cys472, and Cys476 each coordinate [4Fe-4S] cluster. A siroheme-binding site is contributed by Cys476.

This sequence belongs to the nitrite and sulfite reductase 4Fe-4S domain family. As to quaternary structure, alpha(8)-beta(8). The alpha component is a flavoprotein, the beta component is a hemoprotein. Siroheme serves as cofactor. Requires [4Fe-4S] cluster as cofactor.

It catalyses the reaction hydrogen sulfide + 3 NADP(+) + 3 H2O = sulfite + 3 NADPH + 4 H(+). The protein operates within sulfur metabolism; hydrogen sulfide biosynthesis; hydrogen sulfide from sulfite (NADPH route): step 1/1. Component of the sulfite reductase complex that catalyzes the 6-electron reduction of sulfite to sulfide. This is one of several activities required for the biosynthesis of L-cysteine from sulfate. The sequence is that of Sulfite reductase [NADPH] hemoprotein beta-component from Shewanella frigidimarina (strain NCIMB 400).